A 3726-amino-acid polypeptide reads, in one-letter code: Zinc finger homeobox protein 3 (3726 aa).

Disordered regions lie at residues 1-79 and 95-129; these read MEGC…SKEV and MEHH…VENL. The C2H2-type 1 zinc finger occupies 79-103; sequence VSCNECSASFSSLQTYMEHHCPGTH. Positions 116–126 are enriched in acidic residues; sequence TSEEGEEESDV. The C2H2-type 2 zinc finger occupies 282 to 305; sequence LMCFLCKLSFGYVRSFVTHAVHDH. Residues 417-557 are disordered; it reads SVPLGPLASS…GPASTTSNSA (141 aa). At serine 426 the chain carries Phosphoserine. Threonine 428 is subject to Phosphothreonine. Over residues 431–459 the composition is skewed to basic and acidic residues; it reads SEGKDSGAAEGDKQESGGHQDCFSEKVEP. Acidic residues-rich tracts occupy residues 460-491 and 500-510; these read AEEE…EEEE and DLEEELEDSPS. Residues 528–557 are compositionally biased toward polar residues; that stretch reads SNPSISNSPLMPNVLQTLSRGPASTTSNSA. Phosphoserine is present on residues serine 535 and serine 573. The interval 590–621 is disordered; that stretch reads DFADESANKDSATAPEPNESTEGDDGGFVPHH. 3 C2H2-type zinc fingers span residues 641-664, 672-695, and 727-751; these read VECP…TMMH, LKCP…KEKH, and FRCE…SDKH. Residues 805–829 form a C2H2-type 6; atypical zinc finger; that stretch reads WRCEVCDYETNVARNLRIHMTSEKH. A C2H2-type 7; degenerate zinc finger spans residues 946–969; that stretch reads FQCAVCNKFTTDNLDMLGLHMNVE. Residues 985–1009 form a C2H2-type 8; atypical zinc finger; that stretch reads YQCKLCRYNTQLKANFQLHCKTDKH. The C2H2-type 9; atypical zinc-finger motif lies at 1041–1065; that stretch reads LKCNACDYYTNSLEKLRLHTVNSRH. The segment at 1089–1113 adopts a C2H2-type 10; atypical zinc-finger fold; sequence YHCVLCNYSTKAKLNLIQHVRSMKH. Residues 1125-1228 are disordered; the sequence is LQKGLPEEDE…KRPKASEEIK (104 aa). The span at 1149–1159 shows a compositional bias: acidic residues; the sequence is DPEEPVEDAEG. Composition is skewed to polar residues over residues 1175–1191 and 1199–1217; these read GSGS…SSSQ and SPAT…TPLS. Serine 1207 is subject to Phosphoserine. The C2H2-type 11; atypical zinc finger occupies 1233–1256; it reads YQCPYCKYSNADVNRLRVHAMTQH. The C2H2-type 12 zinc-finger motif lies at 1262 to 1285; the sequence is LRCPLCQDMLNNKIHLQLHLTHLH. A disordered region spans residues 1320–1361; the sequence is DGNSTLEEVGKQPEASEDPGKNILPPASMEHGGDLKPTSADP. C2H2-type zinc fingers lie at residues 1370–1395, 1411–1433, and 1439–1462; these read FLCW…NEVH, YRCN…SQYH, and TMCC…ETSH. Residues 1500–1539 form a disordered region; it reads EEDKEEESDLEDKQSPTGSDSGSVQEDSGSEPKRALPFRK. Over residues 1514-1526 the composition is skewed to polar residues; it reads SPTGSDSGSVQED. Residues 1555-1579 form a C2H2-type 16 zinc finger; it reads YKCTVCKESFTQKNILLVHYNSVSH. Serine 1600 carries the post-translational modification Phosphoserine. Residues 1606-1630 form a C2H2-type 17 zinc finger; that stretch reads FKCNTCNVAYSQSSTLEIHMRSVLH. 3 disordered regions span residues 1639–1678, 1706–1738, and 1866–1943; these read LEAA…TATN, NPIS…QQQQ, and LSQS…PRIA. Residues 1643 to 1669 show a composition bias toward low complexity; it reads SGNSNGTGNSGGVSLSSSTPSPVGSSG. A compositionally biased stretch (basic and acidic residues) spans 1717–1727; it reads EPKEANRKKLA. The span at 1866–1878 shows a compositional bias: low complexity; that stretch reads LSQSHSALLQPSQ. The span at 1879–1902 shows a compositional bias: basic and acidic residues; the sequence is HPEKKNKVVIKEKDKESQREREGP. The C2H2-type 18 zinc-finger motif lies at 1990-2013; the sequence is LECDSCGKLFSNILILKSHQEHVH. Disordered stretches follow at residues 2037 to 2089 and 2211 to 2249; these read YPLR…AQPS and NKDS…WGSK. Residues 2041 to 2066 are compositionally biased toward pro residues; that stretch reads PQTPEPPPPPPPPPPPPLPTAPPQPA. The homeobox 1 DNA-binding region spans 2152–2211; the sequence is NKRPRTRITDDQLRVLRQYFDINNSPSEEQIKEMADKSGLPQKVIKHWFRNTLFKERQRN. A compositionally biased stretch (polar residues) spans 2214–2223; sequence SPYNFSNPPI. The segment at residues 2249–2308 is a DNA-binding region (homeobox 2); that stretch reads KRSSRTRFTDYQLRVLQDFFDANAYPKDDEFEQLSNLLNLPTRVIVVWFQNARQKARKNY. The C2H2-type 19; atypical zinc finger occupies 2335–2358; it reads YQCKKCSLVFQRIFDLIKHQKKLC. A Glycyl lysine isopeptide (Lys-Gly) (interchain with G-Cter in SUMO1) cross-link involves residue lysine 2356. 2 disordered regions span residues 2383-2405 and 2429-2529; these read TPTS…APSA and NSKA…PQQL. Over residues 2458 to 2478 the composition is skewed to low complexity; it reads QPKPEMQQQLEQLEQKTNAPQ. Pro residues predominate over residues 2479 to 2507; that stretch reads PKLPQPAAPSLPQPPPQAPPPQCPLPQSS. Residues 2508-2521 show a composition bias toward low complexity; that stretch reads PSPSQLSHLPLKPL. Residues 2539 to 2561 form a C2H2-type 20 zinc finger; sequence YQCDQCKLAFPSFEHWQEHQQLH. The Nuclear localization signal motif lies at 2624–2626; that stretch reads KRK. Residues 2628-2656 are disordered; it reads EEKASASPGENDSGTGGEEPQRDKRLRTT. Position 2634 is a phosphoserine (serine 2634). A DNA-binding region (homeobox 3) is located at residues 2650-2709; sequence DKRLRTTITPEQLEILYQKYLLDSNPTRKMLDHIAHEVGLKKRVVQVWFQNTRARERKGQ. The segment at 2720–2743 adopts a C2H2-type 21 zinc-finger fold; it reads RRCPFCRALFKAKTALEAHIRSRH. Over residues 2780–2789 the composition is skewed to polar residues; the sequence is SHLPPSSSDG. Positions 2780–2805 are disordered; sequence SHLPPSSSDGQGVPLSPVSKTMELSP. Phosphoserine occurs at positions 2795 and 2804. Lysine 2815 is covalently cross-linked (Glycyl lysine isopeptide (Lys-Gly) (interchain with G-Cter in SUMO1); alternate). Lysine 2815 is covalently cross-linked (Glycyl lysine isopeptide (Lys-Gly) (interchain with G-Cter in SUMO2); alternate). A disordered region spans residues 2850–2877; sequence AITDTTTGDEGNADNDSATGIATETKSS. Phosphoserine is present on residues serine 2900 and serine 2904. The disordered stretch occupies residues 2920–2955; the sequence is VDYSETSSLADPCSPSPGASGSAGKSGDGGDRPGQK. Residues 2929–2944 show a composition bias toward low complexity; it reads ADPCSPSPGASGSAGK. Residues 2952-3011 constitute a DNA-binding region (homeobox 4); it reads PGQKRFRTQMTNLQLKVLKSCFNDYRTPTMLECEVLGNDIGLPKRVVQVWFQNARAKEKK. A C2H2-type 22 zinc finger spans residues 3032-3056; the sequence is TECTLCGIKYSARLSVRDHIFSQQH. Disordered regions lie at residues 3145–3274 and 3415–3476; these read FTPA…AGTG and QQQQ…SASA. Positions 3147–3156 are enriched in polar residues; that stretch reads PANTALTSPK. Over residues 3181–3199 the composition is skewed to low complexity; the sequence is PSSASLSSPTPAQATMAMA. The segment covering 3200–3221 has biased composition (pro residues); sequence PQPPPQPQQPQPPVQQPPPPPA. Residues 3222–3234 show a composition bias toward low complexity; that stretch reads AQQIPAPQLTPQQ. Over residues 3235–3267 the composition is skewed to basic and acidic residues; sequence QRKDKDGEKGKEKEKAHKGKGEPLPVPKKEKGE. A Glycyl lysine isopeptide (Lys-Gly) (interchain with G-Cter in SUMO1) cross-link involves residue lysine 3262. Residue serine 3434 is modified to Phosphoserine. Residues 3435 to 3453 are compositionally biased toward basic and acidic residues; the sequence is PDKDPAKESPKPEEQKNVP. The residue at position 3457 (serine 3457) is a Phosphoserine. The segment at 3552 to 3576 adopts a C2H2-type 23 zinc-finger fold; that stretch reads YHCLACESALCGEEALSQHLESALH. A disordered region spans residues 3588–3726; the sequence is AKEHPSLLPH…TSVGTDTFRL (139 aa). Low complexity-rich tracts occupy residues 3605–3618 and 3645–3677; these read STAS…HSND and SRAS…VQPS. Phosphoserine is present on serine 3616. Serine 3700 is subject to Phosphoserine. Positions 3715-3726 are enriched in polar residues; sequence GLTSVGTDTFRL.

As to quaternary structure, interacts with ALKBH4 and PIAS3. Interacts with FNBP3. Interacts with ESR1, RUNX3, TRIM25, SMAD2 and SMAD3. In terms of processing, phosphorylated at Ser-2634 in both embryonic and adult brain. Phosphorylation at Ser-1600, Ser-2795, Ser-2804, Ser-2900, Ser-3434, Ser-3616 and Ser-3700 is restricted to the embryonic brain. Hyperphosphorylation in embryonic brain protects ZFHX3 from calpain/CAPN1-mediated degradation. Post-translationally, ubiquitinated, leading to its proteasomal degradation. Nuclear localization is essential for its sumoylation. Expressed in suprachiasmatic nucleus (SCN) of the brain (at protein level). Expressed in skeletal muscle. Levels of expression are high in myoblasts but low in differentiated muscle. Expressed in the heart, primarily in the atria.

It localises to the nucleus. The protein resides in the cytoplasm. Transcriptional regulator which can act as an activator or a repressor. Inhibits the enhancer element of the AFP gene by binding to its AT-rich core sequence. In concert with SMAD-dependent TGF-beta signaling can repress the transcription of AFP via its interaction with SMAD2/3. Regulates the circadian locomotor rhythms via transcriptional activation of neuropeptidergic genes which are essential for intercellular synchrony and rhythm amplitude in the suprachiasmatic nucleus (SCN) of the brain. Regulator of myoblasts differentiation through the binding to the AT-rich sequence of MYF6 promoter and promoter repression. Down-regulates the MUC5AC promoter in gastric cancer. In association with RUNX3, up-regulates CDKN1A promoter activity following TGF-beta stimulation. This chain is Zinc finger homeobox protein 3 (Zfhx3), found in Mus musculus (Mouse).